The chain runs to 108 residues: MTDTPVEESLFQIIHCFHQYAARQGDMETLSLQELQALLMDNMPRFMDSLGQKEPYYVTELFQATDKNRDNQICFDEFLYILGKLVKDYHLQYHRQLCARYCAQHSLY.

The region spanning 53–88 is the EF-hand domain; the sequence is KEPYYVTELFQATDKNRDNQICFDEFLYILGKLVKD. The Ca(2+) site is built by Asp-66, Asn-68, Asp-70, Gln-72, and Glu-77.

Belongs to the S-100 family.

This is Protein S100-A15A (S100A15A) from Gorilla gorilla gorilla (Western lowland gorilla).